Consider the following 492-residue polypeptide: Catalase (492 aa).

Residues His-65 and Asn-138 contribute to the active site. Residue Tyr-348 coordinates heme.

The protein belongs to the catalase family. In terms of assembly, homotetramer. Heme is required as a cofactor.

It localises to the cytoplasm. It is found in the cytosol. The protein resides in the peroxisome matrix. The enzyme catalyses 2 H2O2 = O2 + 2 H2O. Its function is as follows. Catalyzes the degradation of hydrogen peroxide (H(2)O(2)) generated by peroxisomal oxidases to water and oxygen, thereby protecting cells from the toxic effects of hydrogen peroxide. The protein is Catalase (CATA) of Triticum aestivum (Wheat).